Reading from the N-terminus, the 305-residue chain is Translation initiation factor eIF2B subunit alpha (305 aa).

Position 35 is an N6-acetyllysine (Lys-35).

Belongs to the eIF-2B alpha/beta/delta subunits family. Component of the translation initiation factor 2B (eIF2B) complex which is a heterodecamer of two sets of five different subunits: alpha, beta, gamma, delta and epsilon. Subunits alpha, beta and delta comprise a regulatory subcomplex and subunits epsilon and gamma comprise a catalytic subcomplex. Within the complex, the hexameric regulatory complex resides at the center, with the two heterodimeric catalytic subcomplexes bound on opposite sides.

Its subcellular location is the cytoplasm. It localises to the cytosol. Its activity is regulated as follows. Activated by the chemical integrated stress response (ISR) inhibitor ISRIB which stimulates guanine nucleotide exchange factor activity for both phosphorylated and unphosphorylated eIF2. In terms of biological role, acts as a component of the translation initiation factor 2B (eIF2B) complex, which catalyzes the exchange of GDP for GTP on eukaryotic initiation factor 2 (eIF2) gamma subunit. Its guanine nucleotide exchange factor activity is repressed when bound to eIF2 complex phosphorylated on the alpha subunit, thereby limiting the amount of methionyl-initiator methionine tRNA available to the ribosome and consequently global translation is repressed. The polypeptide is Translation initiation factor eIF2B subunit alpha (EIF2B1) (Macaca fascicularis (Crab-eating macaque)).